Consider the following 951-residue polypeptide: UvrABC system protein A (951 aa).

33 to 40 (GLSGSGKS) contributes to the ATP binding site. The C4-type zinc finger occupies 252 to 279 (CPICGFTVGELEPRLFSFNAPQGACPDC). 2 ABC transporter domains span residues 309–587 (WNPI…RKSL) and 607–935 (GNGK…QYLK). Position 639 to 646 (639 to 646 (GVSGSGKS)) interacts with ATP. A C4-type zinc finger spans residues 738-764 (CEACHGDGILKIEMNFLPDVFVPCEVC).

Belongs to the ABC transporter superfamily. UvrA family. Forms a heterotetramer with UvrB during the search for lesions.

It is found in the cytoplasm. Its function is as follows. The UvrABC repair system catalyzes the recognition and processing of DNA lesions. UvrA is an ATPase and a DNA-binding protein. A damage recognition complex composed of 2 UvrA and 2 UvrB subunits scans DNA for abnormalities. When the presence of a lesion has been verified by UvrB, the UvrA molecules dissociate. In Lactiplantibacillus plantarum (strain ATCC BAA-793 / NCIMB 8826 / WCFS1) (Lactobacillus plantarum), this protein is UvrABC system protein A.